The following is a 201-amino-acid chain: Homeobox protein ceh-28 (201 aa).

A compositionally biased stretch (polar residues) spans 72–84 (SYYSSPSQNQRSY). The tract at residues 72–94 (SYYSSPSQNQRSYQNHRQHSNPD) is disordered. Residues 104-163 (KRKPRVLFTQHQVNELEERFKKQRYVTATEREELAQCLGLTATQVKIWFQNRRYKCKRLA) constitute a DNA-binding region (homeobox).

Belongs to the NK-2 homeobox family.

It localises to the nucleus. Its function is as follows. Probable transcription factor that regulates neuronal differention, including synapse assembly of the cholinergic motor neuron M4. Activates expression of growth factor, neuropeptide and transcription factor genes, such as TGF-beta dbl-1, FMRFamide-like flp-5 and transcription repressor zag-1, in the M4 neuron. Required for pharynx peristalsis. This chain is Homeobox protein ceh-28, found in Caenorhabditis elegans.